The sequence spans 324 residues: Annexin A3 (324 aa).

Annexin repeat units lie at residues 19 to 90, 91 to 162, 174 to 246, and 250 to 321; these read FNPS…ALIT, APAV…TLAD, HLAK…AVVR, and NTPA…KICG. At K178 the chain carries N6-acetyllysine. T268 bears the Phosphothreonine mark.

The protein belongs to the annexin family.

Its function is as follows. Inhibitor of phospholipase A2, also possesses anti-coagulant properties. The protein is Annexin A3 (Anxa3) of Rattus norvegicus (Rat).